A 204-amino-acid chain; its full sequence is LexA repressor (204 aa).

Positions 28 to 48 form a DNA-binding region, H-T-H motif; that stretch reads RAEIAQELGFKSPNAAEEHLK. Catalysis depends on for autocatalytic cleavage activity residues serine 125 and lysine 162.

The protein belongs to the peptidase S24 family. As to quaternary structure, homodimer.

It catalyses the reaction Hydrolysis of Ala-|-Gly bond in repressor LexA.. Functionally, represses a number of genes involved in the response to DNA damage (SOS response), including recA and lexA. In the presence of single-stranded DNA, RecA interacts with LexA causing an autocatalytic cleavage which disrupts the DNA-binding part of LexA, leading to derepression of the SOS regulon and eventually DNA repair. This is LexA repressor from Ectopseudomonas mendocina (strain ymp) (Pseudomonas mendocina).